The primary structure comprises 72 residues: VIP peptides (72 aa).

Isoleucine amide is present on Ile27. Residue Asn72 is modified to Asparagine amide.

Belongs to the glucagon family.

It is found in the secreted. In terms of biological role, VIP is a neuropeptide involved in a diverse array of physiological processes through activating the PACAP subfamily of class B1 G protein-coupled receptors: VIP receptor 1 (VPR1) and VIP receptor 2 (VPR2). Abundantly expressed throughout the CNS and peripheral nervous systems where they primarily exert neuroprotective and immune modulatory roles. Also causes vasodilation, lowers arterial blood pressure, stimulates myocardial contractility, increases glycogenolysis and relaxes the smooth muscle of trachea, stomach and gall bladder. Functionally, PHM-27 is a bioactive form from proteolysis of the same precursor protein, that causes vasodilation. It is a potent agonist of the calcitonin receptor CALCR, with similar efficacy as calcitonin. The polypeptide is VIP peptides (VIP) (Oryctolagus cuniculus (Rabbit)).